A 352-amino-acid chain; its full sequence is NAD(P)H pyrophosphatase NUDT13, mitochondrial (352 aa).

The N-terminal 20 residues, 1–20 (MSLYCRTFFRRKSFGCYRLL), are a transit peptide targeting the mitochondrion. The Nudix hydrolase domain occupies 196–323 (PQMAPVVITL…SLALQPSEAS (128 aa)). A Nudix box motif is present at residues 216-240 (RQSSFPKGLYSALAGFCDIGESVEE).

Belongs to the Nudix hydrolase family. Mg(2+) is required as a cofactor. Mn(2+) serves as cofactor.

Its subcellular location is the mitochondrion. The enzyme catalyses NADH + H2O = reduced beta-nicotinamide D-ribonucleotide + AMP + 2 H(+). It catalyses the reaction NAD(+) + H2O = beta-nicotinamide D-ribonucleotide + AMP + 2 H(+). It carries out the reaction NADPH + H2O = reduced beta-nicotinamide D-ribonucleotide + adenosine 2',5'-bisphosphate + 2 H(+). In terms of biological role, NAD(P)H pyrophosphatase that hydrolyzes NADH into NMNH and AMP, and NADPH into NMNH and 2',5'-ADP. Has a marked preference for the reduced pyridine nucleotides. Does not show activity toward NAD-capped RNAs; the NAD-cap is an atypical cap present at the 5'-end of some RNAs. The polypeptide is NAD(P)H pyrophosphatase NUDT13, mitochondrial (Mus musculus (Mouse)).